We begin with the raw amino-acid sequence, 242 residues long: Uridylate kinase (242 aa).

Residue 16–19 (KVSG) coordinates ATP. Glycine 58 serves as a coordination point for UMP. The ATP site is built by glycine 59 and arginine 63. UMP is bound by residues aspartate 78 and 139-146 (TGNPFCTT). ATP contacts are provided by threonine 166, glutamine 167, tyrosine 172, and aspartate 175.

It belongs to the UMP kinase family. As to quaternary structure, homohexamer.

The protein resides in the cytoplasm. The catalysed reaction is UMP + ATP = UDP + ADP. It functions in the pathway pyrimidine metabolism; CTP biosynthesis via de novo pathway; UDP from UMP (UMPK route): step 1/1. Inhibited by UTP. Its function is as follows. Catalyzes the reversible phosphorylation of UMP to UDP. This chain is Uridylate kinase, found in Rickettsia felis (strain ATCC VR-1525 / URRWXCal2) (Rickettsia azadi).